Here is a 319-residue protein sequence, read N- to C-terminus: Protease HtpX homolog (319 aa).

Transmembrane regions (helical) follow at residues 6–26 (TAMLLAFMTALFMAVGYVIGG) and 28–48 (GGMMIALLMAAGMNFFSYWNS). His-130 is a Zn(2+) binding site. Residue Glu-131 is part of the active site. Residue His-134 coordinates Zn(2+). 2 helical membrane-spanning segments follow: residues 145 to 165 (LTATLAGAISMLGNFAFFFGG) and 172 to 192 (PLGFVGVLIAMIVAPFAAMLV). Residue Glu-201 participates in Zn(2+) binding. The disordered stretch occupies residues 279–319 (REMSAGSTAPARPDNAVRRSRSVPKTGWGRGGSEPPKGPWS).

The protein belongs to the peptidase M48B family. Zn(2+) serves as cofactor.

The protein resides in the cell inner membrane. The chain is Protease HtpX homolog from Sinorhizobium fredii (strain NBRC 101917 / NGR234).